A 505-amino-acid chain; its full sequence is 2-methylcitrate dehydratase (505 aa).

It belongs to the PrpD family. In terms of assembly, monomer.

It carries out the reaction (2S,3S)-2-methylcitrate = 2-methyl-cis-aconitate + H2O. The enzyme catalyses citrate = D-threo-isocitrate. It functions in the pathway organic acid metabolism; propanoate degradation. Its pathway is carbohydrate metabolism; tricarboxylic acid cycle; isocitrate from oxaloacetate: step 1/2. Its function is as follows. Involved in the catabolism of short chain fatty acids (SCFA) via the tricarboxylic acid (TCA)(acetyl degradation route) and via the 2-methylcitrate cycle I (propionate degradation route). Catalyzes the dehydration of 2-methylcitrate (2-MC) to yield the cis isomer of 2-methyl-aconitate. Could also catalyze the dehydration of citrate and the hydration of cis-aconitate. In Mycobacterium tuberculosis (strain ATCC 35801 / TMC 107 / Erdman), this protein is 2-methylcitrate dehydratase.